The chain runs to 78 residues: NAD(P)H-quinone oxidoreductase subunit L (78 aa).

A run of 2 helical transmembrane segments spans residues Ile-10 to Val-30 and Val-47 to Leu-67.

This sequence belongs to the complex I NdhL subunit family. In terms of assembly, NDH-1 can be composed of about 15 different subunits; different subcomplexes with different compositions have been identified which probably have different functions.

The protein localises to the cellular thylakoid membrane. The enzyme catalyses a plastoquinone + NADH + (n+1) H(+)(in) = a plastoquinol + NAD(+) + n H(+)(out). It carries out the reaction a plastoquinone + NADPH + (n+1) H(+)(in) = a plastoquinol + NADP(+) + n H(+)(out). Functionally, NDH-1 shuttles electrons from an unknown electron donor, via FMN and iron-sulfur (Fe-S) centers, to quinones in the respiratory and/or the photosynthetic chain. The immediate electron acceptor for the enzyme in this species is believed to be plastoquinone. Couples the redox reaction to proton translocation, and thus conserves the redox energy in a proton gradient. Cyanobacterial NDH-1 also plays a role in inorganic carbon-concentration. The polypeptide is NAD(P)H-quinone oxidoreductase subunit L (Trichodesmium erythraeum (strain IMS101)).